The primary structure comprises 393 residues: Pyridoxamine--pyruvate transaminase (393 aa).

E68, Y95, and T146 together coordinate pyridoxal 5'-phosphate. An N6-(pyridoxal phosphate)lysine modification is found at K197. A pyridoxal 5'-phosphate-binding site is contributed by R345.

Belongs to the class-V pyridoxal-phosphate-dependent aminotransferase family. Homotetramer. Pyridoxal 5'-phosphate serves as cofactor.

The catalysed reaction is pyridoxamine + pyruvate = pyridoxal + L-alanine. In terms of biological role, catalyzes a reversible transamination reaction between pyridoxamine and pyruvate to form pyridoxal and L-alanine. This Mesorhizobium japonicum (strain LMG 29417 / CECT 9101 / MAFF 303099) (Mesorhizobium loti (strain MAFF 303099)) protein is Pyridoxamine--pyruvate transaminase (ppaT).